The primary structure comprises 145 residues: Transcriptional regulator ZitR (145 aa).

Positions 1 to 142 (MSLANQIDQF…ISQFLSVLTE (142 aa)) constitute an HTH marR-type domain. Zn(2+) contacts are provided by Glu23, Cys29, Glu40, and His41. Positions 53–76 (NARIAEQLKISPAAVTKALKKLQE) form a DNA-binding region, H-T-H motif. Zn(2+) contacts are provided by Glu106, His107, and His111.

In terms of assembly, homodimer.

Its activity is regulated as follows. Zinc acts as a corepressor and is required for DNA-binding activity. Binds up to two zinc ligands per monomer. Inactive under zinc deprivation. Zinc-responsive regulator that represses expression of the zit operon in the presence of zinc. Acts by binding two palindromic operator sites overlapping the -35 and -10 boxes of the zit promoter. Could be a sensitive sensor of intracellular zinc to efficiently respond to zinc variations in the environment. This chain is Transcriptional regulator ZitR (zitR), found in Lactococcus lactis subsp. cremoris (strain MG1363).